The primary structure comprises 906 residues: Disintegrin and metalloproteinase domain-containing protein 22 (906 aa).

Residues 1 to 25 (MQAAVAVSVPFLLLCVLGTCPPARC) form the signal peptide. A propeptide spanning residues 26–222 (GQAGDASLME…KFILKPRPKR (197 aa)) is cleaved from the precursor. N-linked (GlcNAc...) asparagine glycosylation is present at Asn-175. At 223-736 (SKRQLRRYPR…LSGNGVAGTN (514 aa)) the chain is on the extracellular side. The Peptidase M12B domain occupies 239 to 438 (KYIELMIVND…GGGACLFNKP (200 aa)). 17 cysteine pairs are disulfide-bonded: Cys-349-Cys-433, Cys-392-Cys-417, Cys-394-Cys-401, Cys-447-Cys-477, Cys-458-Cys-474, Cys-460-Cys-466, Cys-473-Cys-494, Cys-485-Cys-491, Cys-490-Cys-516, Cys-503-Cys-523, Cys-510-Cys-542, Cys-535-Cys-547, Cys-554-Cys-605, Cys-569-Cys-635, Cys-583-Cys-593, Cys-600-Cys-663, and Cys-657-Cys-668. Positions 444–531 (PPECGNGFIE…QCAPNIHKMD (88 aa)) constitute a Disintegrin domain. Asn-519 carries N-linked (GlcNAc...) asparagine glycosylation. Asn-634 carries an N-linked (GlcNAc...) asparagine glycan. Residue Asn-675 is glycosylated (N-linked (GlcNAc...) asparagine). Residues 675–712 (NFSTCLSSKEGTICSGNGVCSNELKCVCNRHWIGSDCN) form the EGF-like domain. Intrachain disulfides connect Cys-679/Cys-694, Cys-688/Cys-700, and Cys-702/Cys-711. The helical transmembrane segment at 737–757 (IIIGIIAGTILVLALILGITA) threads the bilayer. Residues 758-906 (WGYKNYREQR…QSARLWETSI (149 aa)) lie on the Cytoplasmic side of the membrane. Residues 785–906 (YSDIPPGVST…QSARLWETSI (122 aa)) are disordered. The span at 793–810 (STNSASSSKKRSNGLSHS) shows a compositional bias: low complexity. Ser-810 is modified (phosphoserine). Basic and acidic residues predominate over residues 811–829 (WSERIPDTKHISDICENGR). Ser-834 is subject to Phosphoserine. Residues 842–853 (NKKKIRGKRFRP) show a composition bias toward basic residues. Ser-857, Ser-862, Ser-866, and Ser-870 each carry phosphoserine. The span at 862-877 (SPAKSPSSSTGSIASS) shows a compositional bias: low complexity.

Interacts with LGI1. Interacts with DLG4/PSD95. Also binds LGI4. Interacts with KCNA2 and DLG2. Interacts with ADAM11. Interacts (via C-terminus) with YWHAB/14-3-3 beta. Interacts (via C-terminus) with YWHAZ/14-3-3 zeta. Post-translationally, the precursor is cleaved by a furin endopeptidase. Highly expressed in the brain and in some high-grade but not low-grade gliomas. Detected slightly or not at all in other tissues.

Its subcellular location is the cell membrane. The protein localises to the cell projection. The protein resides in the axon. Probable ligand for integrin in the brain. This is a non catalytic metalloprotease-like protein. Involved in regulation of cell adhesion and spreading and in inhibition of cell proliferation. Neuronal receptor for LGI1. This is Disintegrin and metalloproteinase domain-containing protein 22 (ADAM22) from Homo sapiens (Human).